The following is a 149-amino-acid chain: MKSTLRISLKAGERIFINGAVLRVDRKVALEFLNDVTFLLENHVLQPEGATTPLRQLYFIAQMILINPEGKDHSTALFRKSITMLLSCFRNEEILAELKRIDALVSTGRAFDALKAIRGLYAIEDNILNNHEMPPTMVEQIRREIAPWR.

Belongs to the FlbT family.

Functionally, has a post-transcriptional repressor function in flagellum biogenesis. Associates with the 5'-UTR of fljK mRNA and promotes its degradation. This Rhizobium johnstonii (strain DSM 114642 / LMG 32736 / 3841) (Rhizobium leguminosarum bv. viciae) protein is Probable flagellum biosynthesis repressor protein FlbT.